The primary structure comprises 61 residues: MKAAELRKLTAEELKTKLVEQQQELFNLRFRHATAQLENTSSMGDARRTIARIQTILKEKE.

Belongs to the universal ribosomal protein uL29 family.

This Nitratidesulfovibrio vulgaris (strain ATCC 29579 / DSM 644 / CCUG 34227 / NCIMB 8303 / VKM B-1760 / Hildenborough) (Desulfovibrio vulgaris) protein is Large ribosomal subunit protein uL29.